Consider the following 485-residue polypeptide: Protein LAZ1 (485 aa).

The Cytoplasmic segment spans residues 1–19 (MDILKSYHLLAAAYSAPAW). A helical membrane pass occupies residues 20–40 (ASFMAGAFLVLTLSLSLFLVF). Topologically, residues 41–53 (DHLSTYKNPEEQK) are lumenal. Residues 54–74 (FLIGVILMVPCYSIESFASLV) traverse the membrane as a helical segment. Residues 75–167 (KPSISVDCGI…QVVKFGIVQY (93 aa)) lie on the Cytoplasmic side of the membrane. A helical membrane pass occupies residues 168–188 (MIIKSLTALTALILEAFGVYC). Residues 189–196 (EGEFKWGC) lie on the Lumenal side of the membrane. A helical membrane pass occupies residues 197–217 (GYPYLAVVLNFSQSWALYCLV). Residues 218-241 (QFYGATKDELAHIQPLAKFLTFKS) lie on the Cytoplasmic side of the membrane. A helical transmembrane segment spans residues 242-262 (IVFLTWWQGVAIALLSSLGLF). The Lumenal portion of the chain corresponds to 263–277 (KSSIAQSLQLKTSVQ). Residues 278-298 (DFIICIEMGIASVVHLYVFPA) form a helical membrane-spanning segment. Over 299 to 485 (KPYGLMGDRF…VRGRRWITKD (187 aa)) the chain is Cytoplasmic. Positions 384 to 415 (MEKSITKFNEKLHKISQNIKKHDKEKRRVKDD) form a coiled coil. The segment at 400-485 (QNIKKHDKEK…VRGRRWITKD (86 aa)) is disordered. A compositionally biased stretch (basic and acidic residues) spans 403-416 (KKHDKEKRRVKDDS). A compositionally biased stretch (polar residues) spans 455–469 (GYTSAESGGESSSDQ). The segment covering 476 to 485 (VRGRRWITKD) has biased composition (basic and acidic residues).

The protein belongs to the TMEM184 family.

The protein localises to the endomembrane system. Its subcellular location is the cell membrane. It localises to the cytoplasm. It is found in the cytosol. In terms of biological role, required for programmed cell death (PCD) associated with hypersensitive response (HR). Involved both in the induction of EDS1/PAD4 mediated HR and in accelerated cell death in the acd11 mutant. Not required for HR induction elicited through pathways exclusively dependent on CC-NB-LRR resistance proteins. The protein is Protein LAZ1 of Arabidopsis thaliana (Mouse-ear cress).